Reading from the N-terminus, the 223-residue chain is Deoxyribose-phosphate aldolase (223 aa).

The active-site Proton donor/acceptor is aspartate 91. Lysine 154 acts as the Schiff-base intermediate with acetaldehyde in catalysis. Lysine 183 serves as the catalytic Proton donor/acceptor.

This sequence belongs to the DeoC/FbaB aldolase family. DeoC type 1 subfamily.

The protein localises to the cytoplasm. The catalysed reaction is 2-deoxy-D-ribose 5-phosphate = D-glyceraldehyde 3-phosphate + acetaldehyde. Its pathway is carbohydrate degradation; 2-deoxy-D-ribose 1-phosphate degradation; D-glyceraldehyde 3-phosphate and acetaldehyde from 2-deoxy-alpha-D-ribose 1-phosphate: step 2/2. Functionally, catalyzes a reversible aldol reaction between acetaldehyde and D-glyceraldehyde 3-phosphate to generate 2-deoxy-D-ribose 5-phosphate. The protein is Deoxyribose-phosphate aldolase of Geobacillus sp. (strain WCH70).